Consider the following 601-residue polypeptide: Jacalin-related lectin 3 (601 aa).

Jacalin-type lectin domains are found at residues 13 to 155 (PASL…HTQP), 240 to 382 (AKTY…HVME), and 438 to 583 (PSGP…HMQH).

It belongs to the jacalin lectin family.

The polypeptide is Jacalin-related lectin 3 (JAL3) (Arabidopsis thaliana (Mouse-ear cress)).